The following is a 414-amino-acid chain: Serine/threonine transporter SstT (414 aa).

The next 8 helical transmembrane spans lie at 22-42 (GLVLGIVVALISAPLQETIGF), 54-74 (IFVKALRAVAPILIFFLVMAA), 89-109 (IIVLYLLGTFLAAFVAVIAGF), 148-168 (AIFKANFIGVLAWSIGLGLAL), 189-209 (IVHVIISFAPFGVFGLVAETL), 223-243 (LLAVLIGTMLFTAFVVNPILV), 305-325 (MAGAAITITILTLAAVHTLGL), and 337-357 (IVAALCACGASGVAGGSLLLI).

This sequence belongs to the dicarboxylate/amino acid:cation symporter (DAACS) (TC 2.A.23) family.

The protein resides in the cell inner membrane. It carries out the reaction L-serine(in) + Na(+)(in) = L-serine(out) + Na(+)(out). It catalyses the reaction L-threonine(in) + Na(+)(in) = L-threonine(out) + Na(+)(out). In terms of biological role, involved in the import of serine and threonine into the cell, with the concomitant import of sodium (symport system). In Haemophilus influenzae (strain PittGG), this protein is Serine/threonine transporter SstT.